A 214-amino-acid polypeptide reads, in one-letter code: Probable chorismate pyruvate-lyase (214 aa).

Residues Arg-74, Leu-112, and Glu-173 each contribute to the substrate site. Positions 183 to 214 are disordered; it reads AAPENTGAGGTRLPRRIDTHHTPSKQEERPES. Residues 197-214 show a composition bias toward basic and acidic residues; that stretch reads RRIDTHHTPSKQEERPES.

This sequence belongs to the UbiC family.

The protein localises to the cytoplasm. The catalysed reaction is chorismate = 4-hydroxybenzoate + pyruvate. The protein operates within cofactor biosynthesis; ubiquinone biosynthesis. Functionally, removes the pyruvyl group from chorismate, with concomitant aromatization of the ring, to provide 4-hydroxybenzoate (4HB) for the ubiquinone pathway. This Cupriavidus metallidurans (strain ATCC 43123 / DSM 2839 / NBRC 102507 / CH34) (Ralstonia metallidurans) protein is Probable chorismate pyruvate-lyase.